The following is a 349-amino-acid chain: Ion-translocating oxidoreductase complex subunit D (349 aa).

3 consecutive transmembrane segments (helical) span residues 37 to 57 (AFFGWGTLVQVLLAIIVALSA), 73 to 90 (LSDNSAMLTAILIGVAIP), and 124 to 144 (AMAAYVLLLISFPVQMTTWIA). Thr-185 carries the FMN phosphoryl threonine modification. 5 helical membrane passes run 212-232 (ATGVGWFWVNLAYLAGGLVLL), 239-259 (WHISTGVLAGLFIASSVGFLL), 265-285 (GSPLFHLFSGATMLAAFFIAT), 291-311 (ATSPRGRIIFGTLIGILVYII), and 315-335 (GGYPDAFAFAVLLANLCAPFI).

It belongs to the NqrB/RnfD family. As to quaternary structure, the complex is composed of six subunits: RnfA, RnfB, RnfC, RnfD, RnfE and RnfG. FMN serves as cofactor.

It is found in the cell inner membrane. Its function is as follows. Part of a membrane-bound complex that couples electron transfer with translocation of ions across the membrane. The polypeptide is Ion-translocating oxidoreductase complex subunit D (Shewanella sp. (strain W3-18-1)).